The primary structure comprises 174 residues: Terminase small subunit (174 aa).

It belongs to the skunalikevirus terminase small subunit family.

Probable terminase small subunit. The terminase lies at a unique vertex of the procapsid and is composed of two subunits, a small terminase subunit and a large terminase subunit. Both terminase subunits heterooligomerize and are docked on the portal protein to form the packaging machine. Once the capsid is packaged with the DNA, the terminase complex is substituted by the connector proteins gp15. This chain is Terminase small subunit, found in Lactococcus phage p2 (Lactococcus lactis bacteriophage p2).